Reading from the N-terminus, the 60-residue chain is Potassium channel toxin alpha-KTx 3.6 (60 aa).

Positions 1-22 (MKVFFAVLITLFICSMIIGIHG) are cleaved as a signal peptide. Disulfide bonds link Cys-29-Cys-49, Cys-35-Cys-54, and Cys-39-Cys-56. Lysine amide is present on Lys-59.

It belongs to the short scorpion toxin superfamily. Potassium channel inhibitor family. Alpha-KTx 03 subfamily. Expressed by the venom gland.

The protein localises to the secreted. Its function is as follows. Blocks voltage-gated potassium channels. At 2 uM, blocks rat Kv1.1/KCNA1 and Kv1.3/KCNA3, has a strong effect on rat Kv1.2/KCNA2 and Kv1.6/KCNA6 as well as a moderate effect on Shaker IR. This is Potassium channel toxin alpha-KTx 3.6 from Olivierus martensii (Manchurian scorpion).